The sequence spans 391 residues: Sister chromatid cohesion protein DCC1 (391 aa).

This sequence belongs to the DCC1 family. As to quaternary structure, component of the ctf18-RFC complex which consists of ctf18, ctf8, dscc1 and the RFC complex.

Its subcellular location is the nucleus. Functionally, loads pcna onto primed templates regulating velocity, spacing and restart activity of replication forks. May couple DNA replication to sister chromatid cohesion. This is Sister chromatid cohesion protein DCC1 (dscc1) from Danio rerio (Zebrafish).